The primary structure comprises 753 residues: 5-methyltetrahydropteroyltriglutamate--homocysteine methyltransferase (753 aa).

5-methyltetrahydropteroyltri-L-glutamate-binding positions include 17-20 and lysine 117; that span reads RELK. L-homocysteine is bound by residues 431-433 and glutamate 484; that span reads IGS. L-methionine-binding positions include 431 to 433 and glutamate 484; that span reads IGS. 5-methyltetrahydropteroyltri-L-glutamate is bound by residues 515-516 and tryptophan 561; that span reads RC. Aspartate 599 is a binding site for L-homocysteine. Aspartate 599 lines the L-methionine pocket. Glutamate 605 is a 5-methyltetrahydropteroyltri-L-glutamate binding site. Histidine 641, cysteine 643, and glutamate 665 together coordinate Zn(2+). The active-site Proton donor is the histidine 694. Cysteine 726 is a binding site for Zn(2+).

It belongs to the vitamin-B12 independent methionine synthase family. As to quaternary structure, monomer. Requires Zn(2+) as cofactor.

The enzyme catalyses 5-methyltetrahydropteroyltri-L-glutamate + L-homocysteine = tetrahydropteroyltri-L-glutamate + L-methionine. It participates in amino-acid biosynthesis; L-methionine biosynthesis via de novo pathway; L-methionine from L-homocysteine (MetE route): step 1/1. Its function is as follows. Catalyzes the transfer of a methyl group from 5-methyltetrahydrofolate to homocysteine resulting in methionine formation. The sequence is that of 5-methyltetrahydropteroyltriglutamate--homocysteine methyltransferase from Escherichia coli (strain K12).